The following is a 1125-amino-acid chain: Probable phospholipid-transporting ATPase IIB (1125 aa).

The Cytoplasmic segment spans residues 1-131 (MADGIPLNPV…IKNQKYNIVT (131 aa)). The helical transmembrane segment at 132 to 152 (FVPGVLYQQFKFFLNLYFLVV) threads the bilayer. The Extracellular segment spans residues 153-161 (ACSQFVPSL). Residues 162 to 182 (KIGYLYTYWAPLGFVLAVTMV) form a helical membrane-spanning segment. The Cytoplasmic portion of the chain corresponds to 183–369 (REAVDEVRRC…LDLELNRLTK (187 aa)). A helical transmembrane segment spans residues 370 to 390 (ALFLAQVVLSVVMVALQGFLG). Residues 391–395 (PWFRN) are Extracellular-facing. The helical transmembrane segment at 396–415 (LFRFVVLFSYIIPISLRVNL) threads the bilayer. Topologically, residues 416 to 928 (DMGKSAYGWM…ALGQFVMHRG (513 aa)) are cytoplasmic. The active-site 4-aspartylphosphate intermediate is the D455. 3 residues coordinate ATP: D455, K456, and T457. D455 serves as a coordination point for Mg(2+). T457 provides a ligand contact to Mg(2+). The segment covering 500-511 (QSNGSSASSTPS) has biased composition (low complexity). Disordered regions lie at residues 500-525 (QSNG…RKSV) and 552-574 (GANA…RTYQ). Over residues 558 to 567 (ESTEADQDFS) the composition is skewed to acidic residues. Residues E580, F622, K627, K646, R675, T676, T755, G756, D757, R837, and K843 each contribute to the ATP site. Position 863 (D863) interacts with Mg(2+). ATP is bound by residues N866 and D867. D867 serves as a coordination point for Mg(2+). The helical transmembrane segment at 929-949 (MIISTMQAVFSSIFYFASVPL) threads the bilayer. At 950 to 951 (YQ) the chain is on the extracellular side. Residues 952–972 (GFLMVGYATIYTMFPVFSLVL) traverse the membrane as a helical segment. The Cytoplasmic portion of the chain corresponds to 973–1001 (DQDVKPEMALLYPELYKDLTKGRSLSFKT). A helical membrane pass occupies residues 1002–1022 (FLIWVLISIYQGGILMYGALV). Over 1023 to 1030 (LFDQEFVH) the chain is Extracellular. Residues 1031 to 1051 (VVAISFTALILTELLMVALTI) form a helical membrane-spanning segment. Residues 1052–1055 (RTWH) are Cytoplasmic-facing. The helical transmembrane segment at 1056–1076 (WLMVVAQLISLACYLASLAFL) threads the bilayer. Over 1077-1088 (NEYFDLSFITTR) the chain is Extracellular. A helical transmembrane segment spans residues 1089 to 1109 (VFLWKVCVITLVSCLPLYIIK). Residues 1110–1125 (YLKRKFSPPSYSKLSS) are Cytoplasmic-facing.

The protein belongs to the cation transport ATPase (P-type) (TC 3.A.3) family. Type IV subfamily. The cofactor is Mg(2+).

It is found in the golgi apparatus. It localises to the trans-Golgi network membrane. The catalysed reaction is ATP + H2O + phospholipidSide 1 = ADP + phosphate + phospholipidSide 2.. The protein is Probable phospholipid-transporting ATPase IIB (atp9b) of Danio rerio (Zebrafish).